The primary structure comprises 347 residues: Farnesyl pyrophosphate synthase ERG20 (347 aa).

Isopentenyl diphosphate contacts are provided by lysine 50, arginine 53, and glutamine 88. Aspartate 95 and aspartate 99 together coordinate Mg(2+). Arginine 104 is a dimethylallyl diphosphate binding site. Position 105 (arginine 105) interacts with isopentenyl diphosphate. Residues lysine 192, threonine 193, glutamine 232, lysine 249, and lysine 258 each coordinate dimethylallyl diphosphate.

Belongs to the FPP/GGPP synthase family. The cofactor is Mg(2+).

It carries out the reaction isopentenyl diphosphate + dimethylallyl diphosphate = (2E)-geranyl diphosphate + diphosphate. The catalysed reaction is isopentenyl diphosphate + (2E)-geranyl diphosphate = (2E,6E)-farnesyl diphosphate + diphosphate. Its pathway is isoprenoid biosynthesis; farnesyl diphosphate biosynthesis; farnesyl diphosphate from geranyl diphosphate and isopentenyl diphosphate: step 1/1. It participates in isoprenoid biosynthesis; geranyl diphosphate biosynthesis; geranyl diphosphate from dimethylallyl diphosphate and isopentenyl diphosphate: step 1/1. In terms of biological role, farnesyl pyrophosphate synthase; part of the second module of ergosterol biosynthesis pathway that includes the middle steps of the pathway. ERG20 catalyzes the sequential condensation of isopentenyl pyrophosphate with dimethylallyl pyrophosphate, and then with the resultant geranylpyrophosphate to the ultimate product farnesyl pyrophosphate. The second module is carried out in the vacuole and involves the formation of farnesyl diphosphate, which is also an important intermediate in the biosynthesis of ubiquinone, dolichol, heme and prenylated proteins. Activity by the mevalonate kinase ERG12 (FG05912) first converts mevalonate into 5-phosphomevalonate. 5-phosphomevalonate is then further converted to 5-diphosphomevalonate by the phosphomevalonate kinase ERG8 (FG09764). The diphosphomevalonate decarboxylase ERG19 (FG10424) then produces isopentenyl diphosphate. The isopentenyl-diphosphate delta-isomerase IDI1 (FG09722) then catalyzes the 1,3-allylic rearrangement of the homoallylic substrate isopentenyl (IPP) to its highly electrophilic allylic isomer, dimethylallyl diphosphate (DMAPP). Finally the farnesyl diphosphate synthase ERG20 (FG06784) catalyzes the sequential condensation of isopentenyl pyrophosphate with dimethylallyl pyrophosphate, and then with the resultant geranylpyrophosphate to the ultimate product farnesyl pyrophosphate. This chain is Farnesyl pyrophosphate synthase ERG20, found in Gibberella zeae (strain ATCC MYA-4620 / CBS 123657 / FGSC 9075 / NRRL 31084 / PH-1) (Wheat head blight fungus).